We begin with the raw amino-acid sequence, 229 residues long: Cytochrome c oxidase subunit 2 (229 aa).

Topologically, residues 1–26 (MSTWANLGLQDSASPLMEQLIFFHDH) are mitochondrial intermembrane. A helical membrane pass occupies residues 27 to 48 (ALLILVMITILVGYLMFMLFFN). Over 49–62 (SYINRFLLHGQLIE) the chain is Mitochondrial matrix. Residues 63–82 (MIWTILPAIILLFIAMPSLR) form a helical membrane-spanning segment. The Mitochondrial intermembrane segment spans residues 83-229 (LLYLLDEINE…IKWIASKVNS (147 aa)). Cu cation-binding residues include His161, Cys196, Glu198, Cys200, His204, and Met207. Glu198 serves as a coordination point for Mg(2+).

This sequence belongs to the cytochrome c oxidase subunit 2 family. As to quaternary structure, component of the cytochrome c oxidase (complex IV, CIV), a multisubunit enzyme composed of a catalytic core of 3 subunits and several supernumerary subunits. The complex exists as a monomer or a dimer and forms supercomplexes (SCs) in the inner mitochondrial membrane with ubiquinol-cytochrome c oxidoreductase (cytochrome b-c1 complex, complex III, CIII). Requires Cu cation as cofactor.

It localises to the mitochondrion inner membrane. It catalyses the reaction 4 Fe(II)-[cytochrome c] + O2 + 8 H(+)(in) = 4 Fe(III)-[cytochrome c] + 2 H2O + 4 H(+)(out). Component of the cytochrome c oxidase, the last enzyme in the mitochondrial electron transport chain which drives oxidative phosphorylation. The respiratory chain contains 3 multisubunit complexes succinate dehydrogenase (complex II, CII), ubiquinol-cytochrome c oxidoreductase (cytochrome b-c1 complex, complex III, CIII) and cytochrome c oxidase (complex IV, CIV), that cooperate to transfer electrons derived from NADH and succinate to molecular oxygen, creating an electrochemical gradient over the inner membrane that drives transmembrane transport and the ATP synthase. Cytochrome c oxidase is the component of the respiratory chain that catalyzes the reduction of oxygen to water. Electrons originating from reduced cytochrome c in the intermembrane space (IMS) are transferred via the dinuclear copper A center (CU(A)) of subunit 2 and heme A of subunit 1 to the active site in subunit 1, a binuclear center (BNC) formed by heme A3 and copper B (CU(B)). The BNC reduces molecular oxygen to 2 water molecules using 4 electrons from cytochrome c in the IMS and 4 protons from the mitochondrial matrix. The polypeptide is Cytochrome c oxidase subunit 2 (mt:CoII) (Drosophila bifasciata (Fruit fly)).